We begin with the raw amino-acid sequence, 213 residues long: Probable thymidylate kinase 2 (213 aa).

10–17 (GIDGSGKS) is a binding site for ATP.

It belongs to the thymidylate kinase family.

It carries out the reaction dTMP + ATP = dTDP + ADP. This chain is Probable thymidylate kinase 2 (tmk2), found in Saccharolobus solfataricus (strain ATCC 35092 / DSM 1617 / JCM 11322 / P2) (Sulfolobus solfataricus).